Reading from the N-terminus, the 606-residue chain is Elongation factor 4 (606 aa).

Positions 7–189 (SRIRNFCIIA…AVVDRVPPPK (183 aa)) constitute a tr-type G domain. Residues 19–24 (DHGKST) and 136–139 (NKID) contribute to the GTP site.

Belongs to the TRAFAC class translation factor GTPase superfamily. Classic translation factor GTPase family. LepA subfamily.

The protein localises to the cell inner membrane. It catalyses the reaction GTP + H2O = GDP + phosphate + H(+). Required for accurate and efficient protein synthesis under certain stress conditions. May act as a fidelity factor of the translation reaction, by catalyzing a one-codon backward translocation of tRNAs on improperly translocated ribosomes. Back-translocation proceeds from a post-translocation (POST) complex to a pre-translocation (PRE) complex, thus giving elongation factor G a second chance to translocate the tRNAs correctly. Binds to ribosomes in a GTP-dependent manner. This chain is Elongation factor 4, found in Synechococcus sp. (strain CC9605).